Here is a 318-residue protein sequence, read N- to C-terminus: Aspartate carbamoyltransferase catalytic subunit (318 aa).

Carbamoyl phosphate is bound by residues R54 and T55. K82 is an L-aspartate binding site. Positions 104, 134, and 137 each coordinate carbamoyl phosphate. L-aspartate contacts are provided by R174 and R230. Positions 271 and 272 each coordinate carbamoyl phosphate.

Belongs to the aspartate/ornithine carbamoyltransferase superfamily. ATCase family. Heterododecamer (2C3:3R2) of six catalytic PyrB chains organized as two trimers (C3), and six regulatory PyrI chains organized as three dimers (R2).

It carries out the reaction carbamoyl phosphate + L-aspartate = N-carbamoyl-L-aspartate + phosphate + H(+). The protein operates within pyrimidine metabolism; UMP biosynthesis via de novo pathway; (S)-dihydroorotate from bicarbonate: step 2/3. In terms of biological role, catalyzes the condensation of carbamoyl phosphate and aspartate to form carbamoyl aspartate and inorganic phosphate, the committed step in the de novo pyrimidine nucleotide biosynthesis pathway. This is Aspartate carbamoyltransferase catalytic subunit from Clavibacter michiganensis subsp. michiganensis (strain NCPPB 382).